The chain runs to 314 residues: Dioxygenase easH (314 aa).

Fe cation-binding residues include His-141, Asp-143, and His-217.

The protein belongs to the PhyH family. Homodimer. Fe cation is required as a cofactor.

Its pathway is alkaloid biosynthesis; ergot alkaloid biosynthesis. In terms of biological role, dioxygenase; part of the gene cluster that mediates the biosynthesis of fungal ergot alkaloid. DmaW catalyzes the first step of ergot alkaloid biosynthesis by condensing dimethylallyl diphosphate (DMAP) and tryptophan to form 4-dimethylallyl-L-tryptophan. The second step is catalyzed by the methyltransferase easF that methylates 4-dimethylallyl-L-tryptophan in the presence of S-adenosyl-L-methionine, resulting in the formation of 4-dimethylallyl-L-abrine. The catalase easC and the FAD-dependent oxidoreductase easE then transform 4-dimethylallyl-L-abrine to chanoclavine-I which is further oxidized by easD in the presence of NAD(+), resulting in the formation of chanoclavine-I aldehyde. Agroclavine dehydrogenase easG then mediates the conversion of chanoclavine-I aldehyde to agroclavine via a non-enzymatic adduct reaction: the substrate is an iminium intermediate that is formed spontaneously from chanoclavine-I aldehyde in the presence of glutathione. The presence of easA is not required to complete this reaction. Further conversion of agroclavine to paspalic acid is a two-step process involving oxidation of agroclavine to elymoclavine and of elymoclavine to paspalic acid, the second step being performed by the elymoclavine oxidase cloA. Paspalic acid is then further converted to D-lysergic acid. Ergopeptines are assembled from D-lysergic acid and three different amino acids by the D-lysergyl-peptide-synthetases composed each of a monomudular and a trimodular nonribosomal peptide synthetase subunit. LpsB and lpsC encode the monomodular subunits responsible for D-lysergic acid activation and incorporation into the ergopeptine backbone. LpsA1 and A2 subunits encode the trimodular nonribosomal peptide synthetase assembling the tripeptide portion of ergopeptines. LpsA1 is responsible for formation of the major ergopeptine, ergotamine, and lpsA2 for alpha-ergocryptine, the minor ergopeptine of the total alkaloid mixture elaborated by C.purpurea. D-lysergyl-tripeptides are assembled by the nonribosomal peptide synthetases and released as N-(D-lysergyl-aminoacyl)-lactams. Cyclolization of the D-lysergyl-tripeptides is performed by the Fe(2+)/2-ketoglutarate-dependent dioxygenase easH which introduces a hydroxyl group into N-(D-lysergyl-aminoacyl)-lactam at alpha-C of the aminoacyl residue followed by spontaneous condensation with the terminal lactam carbonyl group. This Claviceps purpurea (strain 20.1) (Ergot fungus) protein is Dioxygenase easH.